The sequence spans 244 residues: DNA repair protein RecO (244 aa).

The protein belongs to the RecO family.

Its function is as follows. Involved in DNA repair and RecF pathway recombination. The protein is DNA repair protein RecO of Caldicellulosiruptor saccharolyticus (strain ATCC 43494 / DSM 8903 / Tp8T 6331).